The sequence spans 286 residues: Pantothenate synthetase (286 aa).

30–37 (MGYFHEGH) contributes to the ATP binding site. The active-site Proton donor is the H37. Q61 contacts (R)-pantoate. Position 61 (Q61) interacts with beta-alanine. Position 147 to 150 (147 to 150 (GKKD)) interacts with ATP. A (R)-pantoate-binding site is contributed by Q153. Residue 184–187 (MSSR) participates in ATP binding.

It belongs to the pantothenate synthetase family. As to quaternary structure, homodimer.

Its subcellular location is the cytoplasm. The enzyme catalyses (R)-pantoate + beta-alanine + ATP = (R)-pantothenate + AMP + diphosphate + H(+). Its pathway is cofactor biosynthesis; (R)-pantothenate biosynthesis; (R)-pantothenate from (R)-pantoate and beta-alanine: step 1/1. Functionally, catalyzes the condensation of pantoate with beta-alanine in an ATP-dependent reaction via a pantoyl-adenylate intermediate. The polypeptide is Pantothenate synthetase (Syntrophus aciditrophicus (strain SB)).